A 100-amino-acid polypeptide reads, in one-letter code: NADH-quinone oxidoreductase subunit K (100 aa).

3 helical membrane passes run Leu4–Met24, Ile28–Val48, and Ile60–Leu80.

The protein belongs to the complex I subunit 4L family. As to quaternary structure, NDH-1 is composed of 13 different subunits. Subunits NuoA, H, J, K, L, M, N constitute the membrane sector of the complex.

The protein resides in the cell membrane. The catalysed reaction is a quinone + NADH + 5 H(+)(in) = a quinol + NAD(+) + 4 H(+)(out). Its function is as follows. NDH-1 shuttles electrons from NADH, via FMN and iron-sulfur (Fe-S) centers, to quinones in the respiratory chain. The immediate electron acceptor for the enzyme in this species is believed to be ubiquinone. Couples the redox reaction to proton translocation (for every two electrons transferred, four hydrogen ions are translocated across the cytoplasmic membrane), and thus conserves the redox energy in a proton gradient. This Buchnera aphidicola subsp. Baizongia pistaciae (strain Bp) protein is NADH-quinone oxidoreductase subunit K.